A 254-amino-acid polypeptide reads, in one-letter code: DNA repair protein RecO (254 aa).

Belongs to the RecO family.

Functionally, involved in DNA repair and RecF pathway recombination. This is DNA repair protein RecO from Agrobacterium fabrum (strain C58 / ATCC 33970) (Agrobacterium tumefaciens (strain C58)).